The chain runs to 105 residues: MARSLCFMAFAILAMMLFVAYEVQARECKTESNTFPGICITKPPCRKACISEKFTDGHCSKLLRRCLCTKPCVFDEKMIKTGAETLVEEAKTLAAALLEEEIMDN.

The N-terminal stretch at methionine 1–alanine 25 is a signal peptide. 4 disulfides stabilise this stretch: cysteine 28/cysteine 72, cysteine 39/cysteine 59, cysteine 45/cysteine 66, and cysteine 49/cysteine 68.

The protein belongs to the DEFL family. As to expression, flower. Found in petals, stamen and pistils, but not in sepals. In particular, accumulation in a configuration surrounding the inner reproductive whorls.

It localises to the secreted. It is found in the cell wall. Its subcellular location is the vacuole. Its function is as follows. Involved in floral organogenesis. May play a protective role in flowers by protecting the reproductive organs from potential pathogen attack. The sequence is that of Defensin-like protein (FST) from Nicotiana tabacum (Common tobacco).